The sequence spans 157 residues: SsrA-binding protein (157 aa).

The segment at 133 to 157 is disordered; it reads LHDKRESEKKRDWGREKGRLLRARG. Residues 135–151 show a composition bias toward basic and acidic residues; that stretch reads DKRESEKKRDWGREKGR.

This sequence belongs to the SmpB family.

The protein resides in the cytoplasm. In terms of biological role, required for rescue of stalled ribosomes mediated by trans-translation. Binds to transfer-messenger RNA (tmRNA), required for stable association of tmRNA with ribosomes. tmRNA and SmpB together mimic tRNA shape, replacing the anticodon stem-loop with SmpB. tmRNA is encoded by the ssrA gene; the 2 termini fold to resemble tRNA(Ala) and it encodes a 'tag peptide', a short internal open reading frame. During trans-translation Ala-aminoacylated tmRNA acts like a tRNA, entering the A-site of stalled ribosomes, displacing the stalled mRNA. The ribosome then switches to translate the ORF on the tmRNA; the nascent peptide is terminated with the 'tag peptide' encoded by the tmRNA and targeted for degradation. The ribosome is freed to recommence translation, which seems to be the essential function of trans-translation. This Nitrobacter winogradskyi (strain ATCC 25391 / DSM 10237 / CIP 104748 / NCIMB 11846 / Nb-255) protein is SsrA-binding protein.